The chain runs to 194 residues: Probable GTP-binding protein EngB (194 aa).

Positions 19 to 193 (DCIQICFWGR…VLFIEENIFK (175 aa)) constitute an EngB-type G domain. GTP is bound by residues 27-34 (GRSNVGKS), 53-57 (GRTQF), 70-73 (DLPG), 137-140 (TKID), and 172-174 (VSS). Positions 34 and 55 each coordinate Mg(2+).

The protein belongs to the TRAFAC class TrmE-Era-EngA-EngB-Septin-like GTPase superfamily. EngB GTPase family. It depends on Mg(2+) as a cofactor.

Its function is as follows. Necessary for normal cell division and for the maintenance of normal septation. The sequence is that of Probable GTP-binding protein EngB from Mycoplasmopsis agalactiae (strain NCTC 10123 / CIP 59.7 / PG2) (Mycoplasma agalactiae).